Reading from the N-terminus, the 450-residue chain is MSTHVTFDYSKALSFISEHELTYLRDAVKVSHHAIHEKTGAGNDFLGWVDLPLAYDKEEFIRIQKCAEKIKNDSDILLVIGIGGSYLGARAAIEMLNHSFYNMLSKEQRKTPQVLFVGQNISSTYMKDLMDVLEGKDFSINVISKSGTTTEPAIAFRLFRKLLEDKYGKEEARKRIYATTDKARGALKTLADEEGYETFVIPDDVGGRFSVLTPVGLLPIAVSGLSIEEMMQGAAAGCNDFAKSELEENPAYQYAVVRNALYNKGKTIEMLVNYEPALQYFAEWWKQLFGESEGKDQKGIFPSSANFSTDLHSLGQYIQEGRRDLFETVLKVGKPTHELTIELDESDLDGLNYLAGKTVDFVNTKAYEGTLLAHSDGGVPNLIVNIPELNEYTFGYLVYFFEKACAMSGYLLGVNPFDQPGVEAYKKNMFALLGKPGFEELKAELEERLK.

Threonine 39 bears the Phosphothreonine mark. The active-site Proton donor is glutamate 291. Residues histidine 312 and lysine 426 contribute to the active site.

The protein belongs to the GPI family.

The protein resides in the cytoplasm. The enzyme catalyses alpha-D-glucose 6-phosphate = beta-D-fructose 6-phosphate. The protein operates within carbohydrate biosynthesis; gluconeogenesis. It participates in carbohydrate degradation; glycolysis; D-glyceraldehyde 3-phosphate and glycerone phosphate from D-glucose: step 2/4. Its function is as follows. Catalyzes the reversible isomerization of glucose-6-phosphate to fructose-6-phosphate. The chain is Glucose-6-phosphate isomerase from Bacillus cytotoxicus (strain DSM 22905 / CIP 110041 / 391-98 / NVH 391-98).